The following is a 134-amino-acid chain: DFHCLPGWSAYDQYCYRVFNEPKNWEDAERFCAKQADSGHLVSIETMGEADFVAQLISENIQSEKHYVWIGLKVQNKEQQCSSEWSDGSSVTYENLIKLYMRKCGALEQESGFRKWINLGCIQLNPFVCKFPPQ.

The C-type lectin domain occupies 1 to 134 (DFHCLPGWSA…NPFVCKFPPQ (134 aa)). Intrachain disulfides connect C4–C15, C32–C129, and C104–C121.

Belongs to the snaclec family. Heterotetramer of the subunits alpha, alpha', beta and beta'; disulfide-linked. In terms of tissue distribution, expressed by the venom gland.

The protein resides in the secreted. Its function is as follows. Potent platelet activator that aggregates platelets via both GPIbalpha (GP1BA) and GPVI (GP6). Induces a tyrosine phosphorylation profile in platelets that resembles this produced by collagen, involving the time dependent tyrosine phosphorylation of Fc receptor gamma chain (FCGR1A), phospholipase Cgamma2 (PLCG2), and LAT. The protein is Snaclec alboaggregin-A subunit alpha' of Trimeresurus albolabris (White-lipped pit viper).